A 371-amino-acid polypeptide reads, in one-letter code: Anhydro-N-acetylmuramic acid kinase (371 aa).

An ATP-binding site is contributed by 10 to 17 (GTSLDGID).

It belongs to the anhydro-N-acetylmuramic acid kinase family.

The catalysed reaction is 1,6-anhydro-N-acetyl-beta-muramate + ATP + H2O = N-acetyl-D-muramate 6-phosphate + ADP + H(+). Its pathway is amino-sugar metabolism; 1,6-anhydro-N-acetylmuramate degradation. It participates in cell wall biogenesis; peptidoglycan recycling. Functionally, catalyzes the specific phosphorylation of 1,6-anhydro-N-acetylmuramic acid (anhMurNAc) with the simultaneous cleavage of the 1,6-anhydro ring, generating MurNAc-6-P. Is required for the utilization of anhMurNAc either imported from the medium or derived from its own cell wall murein, and thus plays a role in cell wall recycling. In Chromohalobacter salexigens (strain ATCC BAA-138 / DSM 3043 / CIP 106854 / NCIMB 13768 / 1H11), this protein is Anhydro-N-acetylmuramic acid kinase.